Here is a 318-residue protein sequence, read N- to C-terminus: MPNIVLFSGSSHQDLSQKVAERLGLELGKVVTKKFSNQETSVEIGESVRGEDVYIIQSGCGEINDNLMELLIMINACKIASSSRVTAVIPCFPYARQDKKDKSRAPISAKLVANMLSVAGADHIITMDLHASQIQGFFDIPVDNLYAEPAVLQWIRENIPEWKNSIIVSPDAGGAKRVTSIADRLNVEFALIHKERKKANEVDRMVLVGDVKDRVAILVDDMADTCGTICHAADKLLSAGATKVYAILTHGIFSGPAISRINNAAFEAVVVTNTIPQEDKMKQCSKIQVIDISMILAEAIRRTHNGESVSYLFSHVPL.

96 to 101 is a binding site for ATP; it reads RQDKKD. Mg(2+)-binding residues include aspartate 128, histidine 130, aspartate 139, and aspartate 143. Histidine 130 is an ATP binding site. The binding of phosphoribosylpyrophosphate stretch occupies residues 212 to 227; it reads KDRVAILVDDMADTCG.

Belongs to the ribose-phosphate pyrophosphokinase family. As to quaternary structure, homodimer. The active form is probably a hexamer composed of 3 homodimers. The cofactor is Mg(2+).

The enzyme catalyses D-ribose 5-phosphate + ATP = 5-phospho-alpha-D-ribose 1-diphosphate + AMP + H(+). It participates in metabolic intermediate biosynthesis; 5-phospho-alpha-D-ribose 1-diphosphate biosynthesis; 5-phospho-alpha-D-ribose 1-diphosphate from D-ribose 5-phosphate (route I): step 1/1. With respect to regulation, activated by magnesium and inorganic phosphate. Competitively or non-competitively inhibited by ADP, 2,3-bisphosphoglyceride or GDP. Catalyzes the synthesis of phosphoribosylpyrophosphate (PRPP) that is essential for nucleotide synthesis. This Xenopus tropicalis (Western clawed frog) protein is Ribose-phosphate pyrophosphokinase 2 (prps2).